Reading from the N-terminus, the 641-residue chain is Chaperone protein DnaK (641 aa).

Position 201 is a phosphothreonine; by autocatalysis (T201). Over residues 604–622 (ASAEQGGAAPGADAGNAGK) the composition is skewed to low complexity. Residues 604 to 625 (ASAEQGGAAPGADAGNAGKAQD) are disordered.

The protein belongs to the heat shock protein 70 family.

Functionally, acts as a chaperone. The protein is Chaperone protein DnaK of Stenotrophomonas maltophilia (strain R551-3).